The primary structure comprises 275 residues: Trans-aconitate 2-methyltransferase (275 aa).

This sequence belongs to the methyltransferase superfamily. Tam family.

Its subcellular location is the cytoplasm. It carries out the reaction trans-aconitate + S-adenosyl-L-methionine = (E)-3-(methoxycarbonyl)pent-2-enedioate + S-adenosyl-L-homocysteine. In terms of biological role, catalyzes the S-adenosylmethionine monomethyl esterification of trans-aconitate. This Pseudomonas aeruginosa (strain UCBPP-PA14) protein is Trans-aconitate 2-methyltransferase.